A 398-amino-acid polypeptide reads, in one-letter code: Phosphoglycerate kinase (398 aa).

Substrate contacts are provided by residues D21–N23, R36, H59–R62, R119, and R157. ATP contacts are provided by residues K208, G296, E327, and G354–S357.

The protein belongs to the phosphoglycerate kinase family. As to quaternary structure, monomer.

Its subcellular location is the cytoplasm. It catalyses the reaction (2R)-3-phosphoglycerate + ATP = (2R)-3-phospho-glyceroyl phosphate + ADP. The protein operates within carbohydrate degradation; glycolysis; pyruvate from D-glyceraldehyde 3-phosphate: step 2/5. The sequence is that of Phosphoglycerate kinase from Streptococcus agalactiae serotype III (strain NEM316).